Here is a 494-residue protein sequence, read N- to C-terminus: Probable cytochrome P450 518A1 (494 aa).

Residues 1–21 form a helical membrane-spanning segment; that stretch reads MSILIILIISIIFYLIFDFLY. C438 contacts heme.

It belongs to the cytochrome P450 family. It depends on heme as a cofactor.

Its subcellular location is the membrane. This is Probable cytochrome P450 518A1 (cyp518A1) from Dictyostelium discoideum (Social amoeba).